The sequence spans 81 residues: Large ribosomal subunit protein bL27 (81 aa).

Over residues 1–11 (MATSKSGGSSK) the composition is skewed to polar residues. The tract at residues 1-24 (MATSKSGGSSKNGRDSISKRLGVK) is disordered.

It belongs to the bacterial ribosomal protein bL27 family.

The protein is Large ribosomal subunit protein bL27 of Borrelia duttonii (strain Ly).